Reading from the N-terminus, the 241-residue chain is Chaperone protein FimC (241 aa).

A signal peptide spans 1 to 36; the sequence is MSNKNVNVRKSQEITFCLLAGILMFMAMMVAGRAEA.

It belongs to the periplasmic pilus chaperone family.

Its subcellular location is the periplasm. Required for the biogenesis of type 1 fimbriae. Binds and interact with FimH. This is Chaperone protein FimC (fimC) from Escherichia coli (strain K12).